The chain runs to 369 residues: Flagellar P-ring protein (369 aa).

Positions Met1–Ala22 are cleaved as a signal peptide.

The protein belongs to the FlgI family. The basal body constitutes a major portion of the flagellar organelle and consists of four rings (L,P,S, and M) mounted on a central rod.

The protein localises to the periplasm. Its subcellular location is the bacterial flagellum basal body. Assembles around the rod to form the L-ring and probably protects the motor/basal body from shearing forces during rotation. This chain is Flagellar P-ring protein, found in Pseudomonas syringae pv. tomato (strain ATCC BAA-871 / DC3000).